The sequence spans 492 residues: Aspartyl/glutamyl-tRNA(Asn/Gln) amidotransferase subunit B (492 aa).

Belongs to the GatB/GatE family. GatB subfamily. In terms of assembly, heterotrimer of A, B and C subunits.

It carries out the reaction L-glutamyl-tRNA(Gln) + L-glutamine + ATP + H2O = L-glutaminyl-tRNA(Gln) + L-glutamate + ADP + phosphate + H(+). The catalysed reaction is L-aspartyl-tRNA(Asn) + L-glutamine + ATP + H2O = L-asparaginyl-tRNA(Asn) + L-glutamate + ADP + phosphate + 2 H(+). Allows the formation of correctly charged Asn-tRNA(Asn) or Gln-tRNA(Gln) through the transamidation of misacylated Asp-tRNA(Asn) or Glu-tRNA(Gln) in organisms which lack either or both of asparaginyl-tRNA or glutaminyl-tRNA synthetases. The reaction takes place in the presence of glutamine and ATP through an activated phospho-Asp-tRNA(Asn) or phospho-Glu-tRNA(Gln). This is Aspartyl/glutamyl-tRNA(Asn/Gln) amidotransferase subunit B from Pelagibacter ubique (strain HTCC1062).